We begin with the raw amino-acid sequence, 140 residues long: Nucleoside diphosphate kinase (140 aa).

Residues K11, F59, R87, T93, R104, and N114 each coordinate ATP. H117 (pros-phosphohistidine intermediate) is an active-site residue.

Belongs to the NDK family. In terms of assembly, homotetramer. Mg(2+) is required as a cofactor.

Its subcellular location is the cytoplasm. The catalysed reaction is a 2'-deoxyribonucleoside 5'-diphosphate + ATP = a 2'-deoxyribonucleoside 5'-triphosphate + ADP. It carries out the reaction a ribonucleoside 5'-diphosphate + ATP = a ribonucleoside 5'-triphosphate + ADP. Its function is as follows. Major role in the synthesis of nucleoside triphosphates other than ATP. The ATP gamma phosphate is transferred to the NDP beta phosphate via a ping-pong mechanism, using a phosphorylated active-site intermediate. The sequence is that of Nucleoside diphosphate kinase from Rickettsia typhi (strain ATCC VR-144 / Wilmington).